We begin with the raw amino-acid sequence, 168 residues long: Crossover junction endodeoxyribonuclease RuvC (168 aa).

Catalysis depends on residues Asp-10, Glu-70, and Asp-143. Asp-10, Glu-70, and Asp-143 together coordinate Mg(2+).

The protein belongs to the RuvC family. Homodimer which binds Holliday junction (HJ) DNA. The HJ becomes 2-fold symmetrical on binding to RuvC with unstacked arms; it has a different conformation from HJ DNA in complex with RuvA. In the full resolvosome a probable DNA-RuvA(4)-RuvB(12)-RuvC(2) complex forms which resolves the HJ. The cofactor is Mg(2+).

Its subcellular location is the cytoplasm. The catalysed reaction is Endonucleolytic cleavage at a junction such as a reciprocal single-stranded crossover between two homologous DNA duplexes (Holliday junction).. Functionally, the RuvA-RuvB-RuvC complex processes Holliday junction (HJ) DNA during genetic recombination and DNA repair. Endonuclease that resolves HJ intermediates. Cleaves cruciform DNA by making single-stranded nicks across the HJ at symmetrical positions within the homologous arms, yielding a 5'-phosphate and a 3'-hydroxyl group; requires a central core of homology in the junction. The consensus cleavage sequence is 5'-(A/T)TT(C/G)-3'. Cleavage occurs on the 3'-side of the TT dinucleotide at the point of strand exchange. HJ branch migration catalyzed by RuvA-RuvB allows RuvC to scan DNA until it finds its consensus sequence, where it cleaves and resolves the cruciform DNA. The protein is Crossover junction endodeoxyribonuclease RuvC of Thermotoga maritima (strain ATCC 43589 / DSM 3109 / JCM 10099 / NBRC 100826 / MSB8).